A 315-amino-acid chain; its full sequence is tRNA-specific adenosine deaminase subunit tad3 (315 aa).

In terms of domain architecture, CMP/dCMP-type deaminase spans 158–299 (KRIESILEDL…AELNHRYLAY (142 aa)). H211, C253, and C256 together coordinate Zn(2+).

Belongs to the cytidine and deoxycytidylate deaminase family. ADAT3 subfamily. As to quaternary structure, heterodimer with Tad2.

The protein localises to the cytoplasm. It localises to the nucleus. Structural subunit of tRNA-specific adenosine deaminase, which deaminates adenosine-34 (the first, also called wobble position of the anticodon) to inosine in many tRNAs. Inosine-34 allows the decoding of 3 different nucleotides at the third position of mRNA codons, as inosine is able to pair with U, C, and A. The wobble inosine tRNA modification is essential for cell cycle progression in the G1/S and G2/M transitions in fission yeast. This chain is tRNA-specific adenosine deaminase subunit tad3 (tad3), found in Schizosaccharomyces pombe (strain 972 / ATCC 24843) (Fission yeast).